Reading from the N-terminus, the 102-residue chain is Large ribosomal subunit protein bL21 (102 aa).

Belongs to the bacterial ribosomal protein bL21 family. In terms of assembly, part of the 50S ribosomal subunit. Contacts protein L20.

This protein binds to 23S rRNA in the presence of protein L20. This is Large ribosomal subunit protein bL21 from Geobacter sp. (strain M21).